The chain runs to 503 residues: Potassium voltage-gated channel subfamily V member 1 (503 aa).

The Cytoplasmic segment spans residues 1–213 (MELLPPRGRA…EKPGSCTAAR (213 aa)). The helical transmembrane segment at 214 to 234 (IFGVISIIFVAVSIVNMALMS) threads the bilayer. Topologically, residues 235–246 (AELSWLDPQLLE) are extracellular. A helical membrane pass occupies residues 247–267 (ILEYVCISWFTGEFVLRFLCV). The Cytoplasmic portion of the chain corresponds to 268–279 (RDRCRFLRKVPN). A helical transmembrane segment spans residues 280-300 (IIDLLAILPFYITLLVESLSG). Residues 301–312 (SQTTQELENVGR) lie on the Extracellular side of the membrane. Residues 313–334 (IVQVLRLLRALRMLKLGRHSTG) form a helical; Voltage-sensor membrane-spanning segment. Over 335-348 (LRSLGMTITQCYEE) the chain is Cytoplasmic. A helical membrane pass occupies residues 349–369 (VGLLLLFLSVGISIFSTVEYF). The short motif at 395–400 (TVGYGD) is the Selectivity filter element. Residues 410 to 430 (IVAFMCILSGILVLALPIAII) traverse the membrane as a helical segment. Topologically, residues 431–503 (NDRFSACYFT…RSSGGDDFWF (73 aa)) are cytoplasmic.

It belongs to the potassium channel family. V (TC 1.A.1.2) subfamily. Kv8.1/KCNV1 sub-subfamily. In terms of assembly, heteromultimer with KCNB1 and KCNB2. Interacts with KCNC4 and KCND1.

Its subcellular location is the cell membrane. In terms of biological role, potassium channel subunit that does not form functional channels by itself. Modulates KCNB1 and KCNB2 channel activity by shifting the threshold for inactivation to more negative values and by slowing the rate of inactivation. Can down-regulate the channel activity of KCNB1, KCNB2, KCNC4 and KCND1, possibly by trapping them in intracellular membranes. This Bos taurus (Bovine) protein is Potassium voltage-gated channel subfamily V member 1 (KCNV1).